The chain runs to 351 residues: Large ribosomal subunit protein uL3 (351 aa).

Disordered regions lie at residues 1 to 31 (MGHR…TPRT) and 246 to 271 (KGSR…GQLG).

This sequence belongs to the universal ribosomal protein uL3 family. In terms of assembly, part of the 50S ribosomal subunit. Forms a cluster with proteins L14 and L24e.

Its function is as follows. One of the primary rRNA binding proteins, it binds directly near the 3'-end of the 23S rRNA, where it nucleates assembly of the 50S subunit. In Saccharolobus islandicus (strain Y.N.15.51 / Yellowstone #2) (Sulfolobus islandicus), this protein is Large ribosomal subunit protein uL3.